Here is a 166-residue protein sequence, read N- to C-terminus: Putative 4-hydroxy-4-methyl-2-oxoglutarate aldolase (166 aa).

Substrate is bound by residues 74 to 77 (GDQI) and R96. Residue D97 participates in a divalent metal cation binding.

This sequence belongs to the class II aldolase/RraA-like family. As to quaternary structure, homotrimer. It depends on a divalent metal cation as a cofactor.

The catalysed reaction is 4-hydroxy-4-methyl-2-oxoglutarate = 2 pyruvate. The enzyme catalyses oxaloacetate + H(+) = pyruvate + CO2. Its function is as follows. Catalyzes the aldol cleavage of 4-hydroxy-4-methyl-2-oxoglutarate (HMG) into 2 molecules of pyruvate. Also contains a secondary oxaloacetate (OAA) decarboxylase activity due to the common pyruvate enolate transition state formed following C-C bond cleavage in the retro-aldol and decarboxylation reactions. In Xanthomonas oryzae pv. oryzae (strain MAFF 311018), this protein is Putative 4-hydroxy-4-methyl-2-oxoglutarate aldolase.